The sequence spans 549 residues: Dihydroxy-acid dehydratase (549 aa).

D78 is a Mg(2+) binding site. C119 contributes to the [2Fe-2S] cluster binding site. D120 and K121 together coordinate Mg(2+). K121 is modified (N6-carboxylysine). C191 contributes to the [2Fe-2S] cluster binding site. E441 contributes to the Mg(2+) binding site. Catalysis depends on S466, which acts as the Proton acceptor.

It belongs to the IlvD/Edd family. As to quaternary structure, homodimer. Requires [2Fe-2S] cluster as cofactor. Mg(2+) serves as cofactor.

It catalyses the reaction (2R)-2,3-dihydroxy-3-methylbutanoate = 3-methyl-2-oxobutanoate + H2O. It carries out the reaction (2R,3R)-2,3-dihydroxy-3-methylpentanoate = (S)-3-methyl-2-oxopentanoate + H2O. The protein operates within amino-acid biosynthesis; L-isoleucine biosynthesis; L-isoleucine from 2-oxobutanoate: step 3/4. It participates in amino-acid biosynthesis; L-valine biosynthesis; L-valine from pyruvate: step 3/4. In terms of biological role, functions in the biosynthesis of branched-chain amino acids. Catalyzes the dehydration of (2R,3R)-2,3-dihydroxy-3-methylpentanoate (2,3-dihydroxy-3-methylvalerate) into 2-oxo-3-methylpentanoate (2-oxo-3-methylvalerate) and of (2R)-2,3-dihydroxy-3-methylbutanoate (2,3-dihydroxyisovalerate) into 2-oxo-3-methylbutanoate (2-oxoisovalerate), the penultimate precursor to L-isoleucine and L-valine, respectively. The chain is Dihydroxy-acid dehydratase from Methanothermobacter thermautotrophicus (strain ATCC 29096 / DSM 1053 / JCM 10044 / NBRC 100330 / Delta H) (Methanobacterium thermoautotrophicum).